Reading from the N-terminus, the 314-residue chain is Putative peptide transport system permease protein BruAb2_1031 (314 aa).

6 consecutive transmembrane segments (helical) span residues 12–32, 101–121, 135–155, 177–197, 237–257, and 286–306; these read AIPVMLIVAILTFLLMKLLPG, LALLAFAITIPVGIIMGVVAA, LALLGVSVPSFWLAILAVILF, WLRSLILPASILALFQIGYLA, VSVLTVSGYIFSLLIGGSVVI, and MLFLGFLFVAINVLVDILYTI. Residues 95–304 form the ABC transmembrane type-1 domain; that stretch reads LPVTISLALL…AINVLVDILY (210 aa).

This sequence belongs to the binding-protein-dependent transport system permease family. As to quaternary structure, the complex is composed of two ATP-binding proteins (BruAb2_1033 and BruAb2_1034), two transmembrane proteins (BruAb2_1031 and BruAb2_1032) and a solute-binding protein (BruAb2_1030).

Its subcellular location is the cell inner membrane. Its function is as follows. Probably part of an ABC transporter complex that could be involved in peptide import. Probably responsible for the translocation of the substrate across the membrane. This is Putative peptide transport system permease protein BruAb2_1031 from Brucella abortus biovar 1 (strain 9-941).